A 330-amino-acid chain; its full sequence is Ketol-acid reductoisomerase (NADP(+)) (330 aa).

One can recognise a KARI N-terminal Rossmann domain in the interval 1 to 181 (MNVYYEQDAD…GGTKAGVIET (181 aa)). NADP(+) is bound by residues 24-27 (YGSQ), R47, S50, S52, and 82-85 (DQTQ). H107 is an active-site residue. An NADP(+)-binding site is contributed by G133. A KARI C-terminal knotted domain is found at 182–327 (NFKDETETDL…AKLRNMMSWL (146 aa)). Mg(2+)-binding residues include D190, E194, E226, and E230. A substrate-binding site is contributed by S251.

This sequence belongs to the ketol-acid reductoisomerase family. The cofactor is Mg(2+).

It catalyses the reaction (2R)-2,3-dihydroxy-3-methylbutanoate + NADP(+) = (2S)-2-acetolactate + NADPH + H(+). The enzyme catalyses (2R,3R)-2,3-dihydroxy-3-methylpentanoate + NADP(+) = (S)-2-ethyl-2-hydroxy-3-oxobutanoate + NADPH + H(+). It functions in the pathway amino-acid biosynthesis; L-isoleucine biosynthesis; L-isoleucine from 2-oxobutanoate: step 2/4. The protein operates within amino-acid biosynthesis; L-valine biosynthesis; L-valine from pyruvate: step 2/4. Its function is as follows. Involved in the biosynthesis of branched-chain amino acids (BCAA). Catalyzes an alkyl-migration followed by a ketol-acid reduction of (S)-2-acetolactate (S2AL) to yield (R)-2,3-dihydroxy-isovalerate. In the isomerase reaction, S2AL is rearranged via a Mg-dependent methyl migration to produce 3-hydroxy-3-methyl-2-ketobutyrate (HMKB). In the reductase reaction, this 2-ketoacid undergoes a metal-dependent reduction by NADPH to yield (R)-2,3-dihydroxy-isovalerate. The chain is Ketol-acid reductoisomerase (NADP(+)) from Chlorobium luteolum (strain DSM 273 / BCRC 81028 / 2530) (Pelodictyon luteolum).